A 145-amino-acid polypeptide reads, in one-letter code: MSQKAIKGYINLIIPAAGATPAPPIGPALGQRKVNIAAFCKDFNDATQGMEKGIPLPTVITVYEDSSFSFKIKTPPASYFLKKYAKITKGSSATKKEAVVGKVTMDDCREIAKLKMPDLNTKNIEAATKIICGSAASMGLEVVGN.

The protein belongs to the universal ribosomal protein uL11 family. In terms of assembly, part of the ribosomal stalk of the 50S ribosomal subunit. Interacts with L10 and the large rRNA to form the base of the stalk. L10 forms an elongated spine to which L12 dimers bind in a sequential fashion forming a multimeric L10(L12)X complex. In terms of processing, one or more lysine residues are methylated.

In terms of biological role, forms part of the ribosomal stalk which helps the ribosome interact with GTP-bound translation factors. The sequence is that of Large ribosomal subunit protein uL11 from Rickettsia africae (strain ESF-5).